Reading from the N-terminus, the 137-residue chain is Glutamate mutase sigma subunit (137 aa).

The B12-binding domain occupies 3-137; the sequence is KKTIVLGVIG…ADMKEVLGVE (135 aa). Adenosylcob(III)alamin is bound by residues 13 to 17, His-16, 61 to 63, and 93 to 97; these read SDCHA, SSL, and NIVVG.

The protein belongs to the methylaspartate mutase GlmS subunit family. Heterotetramer composed of 2 epsilon subunits (GlmE) and 2 sigma subunits (GlmS). GlmE exists as a homodimer and GlmS as a monomer. The cofactor is adenosylcob(III)alamin.

It catalyses the reaction (2S,3S)-3-methyl-L-aspartate = L-glutamate. It participates in amino-acid degradation; L-glutamate degradation via mesaconate pathway; acetate and pyruvate from L-glutamate: step 1/4. Functionally, catalyzes the carbon skeleton rearrangement of L-glutamate to L-threo-3-methylaspartate ((2S,3S)-3-methylaspartate). The polypeptide is Glutamate mutase sigma subunit (Clostridium tetanomorphum).